The sequence spans 1547 residues: Fatty acid synthase subunit alpha (1547 aa).

The interval 94 to 121 is disordered; it reads TLPEAHPPPPIDSHQEPSTQTQATHRSA. A compositionally biased stretch (polar residues) spans 109–118; it reads EPSTQTQATH. One can recognise a Carrier domain in the interval 145–221; it reads LPVSTIVRSL…ETMSIGHNGR (77 aa). S180 carries the O-(pantetheine 4'-phosphoryl)serine modification. Positions 563-798 are ketoreductase (KR) domain; the sequence is GKNVLITGAG…ATLMGGTITT (236 aa). The Ketosynthase family 3 (KS3) domain maps to 1004-1476; sequence KESLQEIVLQ…QKGSQAILIH (473 aa). Catalysis depends on for beta-ketoacyl synthase activity residues C1190 and H1442.

It belongs to the thiolase-like superfamily. Fungal fatty acid synthetase subunit alpha family. It depends on pantetheine 4'-phosphate as a cofactor.

It carries out the reaction acetyl-CoA + n malonyl-CoA + 2n NADPH + 4n H(+) = a long-chain-acyl-CoA + n CoA + n CO2 + 2n NADP(+).. The enzyme catalyses a fatty acyl-[ACP] + malonyl-[ACP] + H(+) = a 3-oxoacyl-[ACP] + holo-[ACP] + CO2. It catalyses the reaction a (3R)-hydroxyacyl-[ACP] + NADP(+) = a 3-oxoacyl-[ACP] + NADPH + H(+). It functions in the pathway mycotoxin biosynthesis; HC-toxin biosynthesis. Its function is as follows. Fatty acid synthase alpha subunit, part of the diffuse TOX2 gene cluster that mediates the biosynthesis of the HC-toxin, cyclic tetrapeptide of structure cyclo(D-Pro-L-Ala-D-Ala-L-Aeo), where Aeo stands for 2-amino-9,10-epoxi-8-oxodecanoic acid. HC-toxin is a determinant of specificity and virulence in the interaction between the producing fungus and its host, maize. TOXH contribute to the synthesis of the decanoic backbone of 2-amino-9,10-epoxi-8-oxodecanoic acid, an essential precursor for the production of the major forms of HC-toxin by the non-ribosomal peptide synthetase HTS1. This Cochliobolus carbonum (Maize leaf spot fungus) protein is Fatty acid synthase subunit alpha.